Reading from the N-terminus, the 434-residue chain is Putative peptidase B (434 aa).

Positions 198 and 203 each coordinate Mn(2+). Lys-210 is a catalytic residue. Residues Asp-221, Asp-280, and Glu-282 each contribute to the Mn(2+) site. Arg-284 is an active-site residue.

Belongs to the peptidase M17 family. Homohexamer. Mn(2+) is required as a cofactor.

Its subcellular location is the cytoplasm. The catalysed reaction is Release of an N-terminal amino acid, Xaa, from a peptide or arylamide. Xaa is preferably Glu or Asp but may be other amino acids, including Leu, Met, His, Cys and Gln.. Its function is as follows. Probably plays an important role in intracellular peptide degradation. In Haemophilus influenzae (strain ATCC 51907 / DSM 11121 / KW20 / Rd), this protein is Putative peptidase B.